Consider the following 1360-residue polypeptide: NAD(+) hydrolase sarm1 (1360 aa).

The tract at residues 27-52 (RITGGPGSISTTSASAITAPSTMSQT) is disordered. The span at 34 to 48 (SISTTSASAITAPST) shows a compositional bias: low complexity. 2 SAM domains span residues 690–754 (WSVE…LKRM) and 760–828 (KDTA…NSLP). The TIR domain maps to 837–981 (KTLDVFVSYR…KLERFLRGEK (145 aa)). Residues 846 to 847 (RR) and Glu-876 contribute to the NAD(+) site. The active site involves Glu-919. Residues 997–1010 (VSYQRMHSNDSDYQ) are compositionally biased toward polar residues. Disordered stretches follow at residues 997–1026 (VSYQRMHSNDSDYQSGGAGAGSGAGTGGGG), 1046–1085 (GQANHQANRYRQSPSPARQRGSTSQLSGYSRAPSKRSQIL), 1121–1148 (SAAGLGHGSGSGMGSGYRSHSVDGLLDQ), 1192–1217 (NDSVTRRDKHTLSPPGNVQQHRKSRS), and 1249–1343 (IPMT…GNNK). Residues 1012–1026 (GGAGAGSGAGTGGGG) show a composition bias toward gly residues. Residues 1046-1073 (GQANHQANRYRQSPSPARQRGSTSQLSG) are compositionally biased toward polar residues. Positions 1125–1135 (LGHGSGSGMGS) are enriched in gly residues. Low complexity predominate over residues 1321–1335 (SLTSNKTSNSSLGSN).

The protein belongs to the SARM1 family. Widely expressed in larval brains and adult brains.

It is found in the cytoplasm. The protein localises to the cell projection. Its subcellular location is the axon. It carries out the reaction NAD(+) + H2O = ADP-D-ribose + nicotinamide + H(+). The catalysed reaction is NAD(+) = cyclic ADP-beta-D-ribose + nicotinamide + H(+). NAD(+) hydrolase, which plays a key role in axonal degeneration following injury by regulating NAD(+) metabolism. Acts as a negative regulator of MYD88- and TRIF-dependent toll-like receptor signaling pathway by promoting Wallerian degeneration, an injury-induced form of programmed subcellular death which involves degeneration of an axon distal to the injury site. Wallerian degeneration is triggered by NAD(+) depletion: in response to injury, it is activated and catalyzes cleavage of NAD(+) into ADP-D-ribose (ADPR), cyclic ADPR (cADPR) and nicotinamide; NAD(+) cleavage promoting axon destruction. Involved in the down-regulation of the tracheal immune response to Gram-negative bacteria. This is likely by mediating Tollo signaling in the tracheal epithelium. In Drosophila melanogaster (Fruit fly), this protein is NAD(+) hydrolase sarm1.